A 235-amino-acid chain; its full sequence is Large ribosomal subunit protein uL1 (235 aa).

It belongs to the universal ribosomal protein uL1 family. As to quaternary structure, part of the 50S ribosomal subunit.

Binds directly to 23S rRNA. The L1 stalk is quite mobile in the ribosome, and is involved in E site tRNA release. In terms of biological role, protein L1 is also a translational repressor protein, it controls the translation of the L11 operon by binding to its mRNA. This chain is Large ribosomal subunit protein uL1, found in Mycobacteroides abscessus (strain ATCC 19977 / DSM 44196 / CCUG 20993 / CIP 104536 / JCM 13569 / NCTC 13031 / TMC 1543 / L948) (Mycobacterium abscessus).